Here is a 225-residue protein sequence, read N- to C-terminus: Orotate phosphoribosyltransferase (225 aa).

Lys29 is a 5-phospho-alpha-D-ribose 1-diphosphate binding site. Orotate is bound at residue 37 to 38 (FF). Residues 75–76 (YK), Arg101, Lys102, Lys105, His107, and 126–134 (DDVISAGTS) contribute to the 5-phospho-alpha-D-ribose 1-diphosphate site. The orotate site is built by Ser130 and Arg158.

This sequence belongs to the purine/pyrimidine phosphoribosyltransferase family. PyrE subfamily. As to quaternary structure, homodimer. Mg(2+) is required as a cofactor.

It catalyses the reaction orotidine 5'-phosphate + diphosphate = orotate + 5-phospho-alpha-D-ribose 1-diphosphate. It participates in pyrimidine metabolism; UMP biosynthesis via de novo pathway; UMP from orotate: step 1/2. Its function is as follows. Catalyzes the transfer of a ribosyl phosphate group from 5-phosphoribose 1-diphosphate to orotate, leading to the formation of orotidine monophosphate (OMP). This chain is Orotate phosphoribosyltransferase, found in Ralstonia pickettii (strain 12J).